Here is a 368-residue protein sequence, read N- to C-terminus: 3-dehydroquinate synthase (368 aa).

NAD(+) is bound by residues Gly112–Asp116, Thr136–Thr137, Lys149, and Lys158. Zn(2+) is bound by residues Glu191, His256, and His273.

It belongs to the sugar phosphate cyclases superfamily. Dehydroquinate synthase family. Co(2+) serves as cofactor. It depends on Zn(2+) as a cofactor. Requires NAD(+) as cofactor.

The protein resides in the cytoplasm. The catalysed reaction is 7-phospho-2-dehydro-3-deoxy-D-arabino-heptonate = 3-dehydroquinate + phosphate. The protein operates within metabolic intermediate biosynthesis; chorismate biosynthesis; chorismate from D-erythrose 4-phosphate and phosphoenolpyruvate: step 2/7. Catalyzes the conversion of 3-deoxy-D-arabino-heptulosonate 7-phosphate (DAHP) to dehydroquinate (DHQ). The protein is 3-dehydroquinate synthase of Prochlorococcus marinus (strain NATL1A).